The sequence spans 159 residues: 2-C-methyl-D-erythritol 2,4-cyclodiphosphate synthase (159 aa).

A divalent metal cation is bound by residues Asp10 and His12. 4-CDP-2-C-methyl-D-erythritol 2-phosphate contacts are provided by residues 10–12 (DVH) and 36–37 (HS). His44 is a binding site for a divalent metal cation. Residues 58-60 (DIG), 63-67 (FSDTD), and Arg144 contribute to the 4-CDP-2-C-methyl-D-erythritol 2-phosphate site.

The protein belongs to the IspF family. In terms of assembly, homotrimer. The cofactor is a divalent metal cation.

The enzyme catalyses 4-CDP-2-C-methyl-D-erythritol 2-phosphate = 2-C-methyl-D-erythritol 2,4-cyclic diphosphate + CMP. The protein operates within isoprenoid biosynthesis; isopentenyl diphosphate biosynthesis via DXP pathway; isopentenyl diphosphate from 1-deoxy-D-xylulose 5-phosphate: step 4/6. Functionally, involved in the biosynthesis of isopentenyl diphosphate (IPP) and dimethylallyl diphosphate (DMAPP), two major building blocks of isoprenoid compounds. Catalyzes the conversion of 4-diphosphocytidyl-2-C-methyl-D-erythritol 2-phosphate (CDP-ME2P) to 2-C-methyl-D-erythritol 2,4-cyclodiphosphate (ME-CPP) with a corresponding release of cytidine 5-monophosphate (CMP). The chain is 2-C-methyl-D-erythritol 2,4-cyclodiphosphate synthase from Paraburkholderia xenovorans (strain LB400).